A 404-amino-acid polypeptide reads, in one-letter code: Protein translocase subunit SecF (404 aa).

The next 6 membrane-spanning stretches (helical) occupy residues 15–35 (KWYF…SMGA), 225–245 (LLAT…RFEL), 246–266 (IYGI…VGAF), 275–295 (LTVV…TIVV), 327–347 (ILTS…GGEV), and 355–375 (LVIG…PMLV).

It belongs to the SecD/SecF family. SecF subfamily. In terms of assembly, forms a complex with SecD. Part of the essential Sec protein translocation apparatus which comprises SecA, SecYEG and auxiliary proteins SecDF. Other proteins may also be involved.

It is found in the cell inner membrane. Its function is as follows. Part of the Sec protein translocase complex. Interacts with the SecYEG preprotein conducting channel. SecDF uses the proton motive force (PMF) to complete protein translocation after the ATP-dependent function of SecA. This chain is Protein translocase subunit SecF, found in Koribacter versatilis (strain Ellin345).